The following is a 147-amino-acid chain: D-aminoacyl-tRNA deacylase (147 aa).

The Gly-cisPro motif, important for rejection of L-amino acids signature appears at 136-137 (GP).

The protein belongs to the DTD family. As to quaternary structure, homodimer.

Its subcellular location is the cytoplasm. It carries out the reaction glycyl-tRNA(Ala) + H2O = tRNA(Ala) + glycine + H(+). The catalysed reaction is a D-aminoacyl-tRNA + H2O = a tRNA + a D-alpha-amino acid + H(+). Functionally, an aminoacyl-tRNA editing enzyme that deacylates mischarged D-aminoacyl-tRNAs. Also deacylates mischarged glycyl-tRNA(Ala), protecting cells against glycine mischarging by AlaRS. Acts via tRNA-based rather than protein-based catalysis; rejects L-amino acids rather than detecting D-amino acids in the active site. By recycling D-aminoacyl-tRNA to D-amino acids and free tRNA molecules, this enzyme counteracts the toxicity associated with the formation of D-aminoacyl-tRNA entities in vivo and helps enforce protein L-homochirality. The sequence is that of D-aminoacyl-tRNA deacylase from Streptococcus pneumoniae serotype 4 (strain ATCC BAA-334 / TIGR4).